Consider the following 73-residue polypeptide: Translation initiation factor IF-1 (73 aa).

The S1-like domain occupies 1–73 (MAKKDGAIEI…TRGRIVYRYK (73 aa)).

The protein belongs to the IF-1 family. As to quaternary structure, component of the 30S ribosomal translation pre-initiation complex which assembles on the 30S ribosome in the order IF-2 and IF-3, IF-1 and N-formylmethionyl-tRNA(fMet); mRNA recruitment can occur at any time during PIC assembly.

It is found in the cytoplasm. One of the essential components for the initiation of protein synthesis. Stabilizes the binding of IF-2 and IF-3 on the 30S subunit to which N-formylmethionyl-tRNA(fMet) subsequently binds. Helps modulate mRNA selection, yielding the 30S pre-initiation complex (PIC). Upon addition of the 50S ribosomal subunit IF-1, IF-2 and IF-3 are released leaving the mature 70S translation initiation complex. This chain is Translation initiation factor IF-1, found in Thermobifida fusca (strain YX).